The primary structure comprises 200 residues: 2,3-bisphosphoglycerate-dependent phosphoglycerate mutase (200 aa).

His9 acts as the Tele-phosphohistidine intermediate in catalysis. Residue His142 is part of the active site.

This sequence belongs to the phosphoglycerate mutase family. Homodimer.

The enzyme catalyses (2R)-2-phosphoglycerate = (2R)-3-phosphoglycerate. Its pathway is carbohydrate degradation; glycolysis; pyruvate from D-glyceraldehyde 3-phosphate: step 3/5. In terms of biological role, catalyzes the interconversion of 2-phosphoglycerate and 3-phosphoglycerate. This chain is 2,3-bisphosphoglycerate-dependent phosphoglycerate mutase, found in Thermoplasma acidophilum (strain ATCC 25905 / DSM 1728 / JCM 9062 / NBRC 15155 / AMRC-C165).